Here is a 591-residue protein sequence, read N- to C-terminus: DDB1- and CUL4-associated factor 8 (591 aa).

A compositionally biased stretch (polar residues) spans 1-25; the sequence is MSNKRPNTTDGRTDLANGSLSSSPE. The tract at residues 1–140 is disordered; that stretch reads MSNKRPNTTD…EDWVSSETTA (140 aa). Residues serine 22 and serine 23 each carry the phosphoserine modification. The Nuclear export signal signature appears at 40 to 51; sequence IEVEASDLSLSL. 2 stretches are compositionally biased toward basic and acidic residues: residues 66–100 and 118–131; these read RGTD…HGHS and SRDQ…RALE. A phosphoserine mark is found at serine 100, serine 123, and serine 124. 7 WD repeats span residues 185–224, 228–269, 275–315, 323–363, 379–418, 426–466, and 470–509; these read GHTG…PVLD, GHKS…CCKN, QHKG…PASK, EKKV…ENEN, ESKA…GAQY, RNNA…IIQF, and DKGG…STEL. Arginine 198 is subject to Omega-N-methylarginine; by PRMT1. The interval 552-591 is disordered; it reads HRRWREPGVGATDADSDESPSSSDTSDEEEGPDRVQCMPS.

Belongs to the WD repeat DCAF8 family. As to quaternary structure, interacts with DDB1, CUL4A and CUL4B. Interacts with KPNA1, KPNB1 and XPO1. In terms of tissue distribution, expressed in the brain.

The protein resides in the nucleus. It is found in the cytoplasm. The protein operates within protein modification; protein ubiquitination. Functionally, may function as a substrate receptor for CUL4-DDB1 E3 ubiquitin-protein ligase complex. This Mus musculus (Mouse) protein is DDB1- and CUL4-associated factor 8 (Dcaf8).